We begin with the raw amino-acid sequence, 329 residues long: MAAMVDSKPAASVQGTPLLATATLPVFTRGIYSTKRITLETSSPSSPPPPKPLIIVTPAEKGTFNVILFLHGTSLSNKSYSKIFDHIASHGFIVVAPQLYTSIPPPSATNELNSAAEVAEWLPQGLQQNLPENTEANVSLVAVMGHSRGGQTAFALSLRYGFGAVIGLDPVAGTSKTTGLDPSILSFDSFDFSIPVTVIGTGLGGVARCITACAPEGANHEEFFNRCKNSSRAHFVATDYGHMDILDDNPSDVKSWALSKYFCKNGNESRDPMRRCVSGIVVAFLKDFFDGDAEDFRQILKDPSFAPIKLDSVEYIDASSMLTTTHVKV.

The N-terminal 21 residues, Met-1–Thr-21, are a transit peptide targeting the chloroplast. The GXSXG signature appears at Gly-145 to Gly-149. Catalysis depends on Ser-147, which acts as the Nucleophile. Active-site charge relay system residues include Asp-169 and His-242.

Belongs to the AB hydrolase superfamily. Lipase family.

The protein localises to the plastid. It is found in the chloroplast. It catalyses the reaction a chlorophyll + H2O = a chlorophyllide + phytol + H(+). The protein operates within porphyrin-containing compound metabolism; chlorophyll degradation. Catalyzes the hydrolysis of ester bond in chlorophyll to yield chlorophyllide and phytol. The protein is Chlorophyllase-1, chloroplastic of Citrus unshiu (Satsuma mandarin).